The following is an 87-amino-acid chain: Large ribosomal subunit protein eL34 (87 aa).

The protein belongs to the eukaryotic ribosomal protein eL34 family.

The sequence is that of Large ribosomal subunit protein eL34 from Sulfurisphaera tokodaii (strain DSM 16993 / JCM 10545 / NBRC 100140 / 7) (Sulfolobus tokodaii).